Consider the following 279-residue polypeptide: Ultraviolet N-glycosylase/AP lyase (279 aa).

The HhH domain occupies 123–142 (LEDLVALPGVGRKTAFVVLG). Residues cysteine 203, cysteine 210, cysteine 213, and cysteine 219 each contribute to the [4Fe-4S] cluster site. The segment at 256-279 (TAGAAGPRPRAGGXAPGLPAQPFR) is disordered.

This sequence belongs to the Nth/MutY family. [4Fe-4S] cluster serves as cofactor.

Its function is as follows. DNA repair enzyme that has both DNA N-glycosylase activity and AP-lyase activity. Initiates repair at cis-syn pyrimidine dimers. Proceeds via an imino enzyme:DNA intermediate. The protein is Ultraviolet N-glycosylase/AP lyase (pdg) of Micrococcus luteus (strain ATCC 4698 / DSM 20030 / JCM 1464 / CCM 169 / CCUG 5858 / IAM 1056 / NBRC 3333 / NCIMB 9278 / NCTC 2665 / VKM Ac-2230) (Micrococcus lysodeikticus).